A 570-amino-acid polypeptide reads, in one-letter code: Fibropellin-3 (570 aa).

A signal peptide spans 1 to 17 (MKVSLLAVLLLSIVAAT). Residues 18–55 (YGQGECGSNPCENGSVCRDGEGTYICECQMGYDGQNCD) enclose the EGF-like 1 domain. Disulfide bonds link Cys23/Cys34, Cys28/Cys43, Cys45/Cys54, and Cys62/Cys88. An N-linked (GlcNAc...) asparagine glycan is attached at Asn30. The 114-residue stretch at 62 to 175 (CGYNIFESTG…RKGFRITFSS (114 aa)) folds into the CUB domain. N-linked (GlcNAc...) asparagine glycosylation is present at Asn136. The region spanning 176 to 212 (DGDDCTPNPCLNGATCVDQVNDYQCICAPGFTGDNCE) is the EGF-like 2; calcium-binding domain. 22 cysteine pairs are disulfide-bonded: Cys180-Cys191, Cys185-Cys200, Cys202-Cys211, Cys218-Cys229, Cys223-Cys238, Cys240-Cys249, Cys256-Cys267, Cys261-Cys276, Cys278-Cys287, Cys294-Cys305, Cys299-Cys314, Cys316-Cys325, Cys332-Cys343, Cys337-Cys352, Cys354-Cys363, Cys370-Cys381, Cys375-Cys390, Cys392-Cys401, Cys408-Cys419, Cys413-Cys428, Cys430-Cys439, and Cys445-Cys521. The 37-residue stretch at 214-250 (DIDECASAPCRNGGACVDQVNGYTCNCIPGFNGVNCE) folds into the EGF-like 3; calcium-binding domain. Residues 252–288 (NINECASIPCLNGGICVDGINQFACTCLPGYTGILCE) form the EGF-like 4; calcium-binding domain. In terms of domain architecture, EGF-like 5; calcium-binding spans 290–326 (DINECASSPCQNGGSCTDAVNRYTCDCRAGFTGSNCE). Positions 328-364 (NINECASSPCLNGGSCLDGVDGYVCQCLPNYTGTHCE) constitute an EGF-like 6; calcium-binding domain. N-linked (GlcNAc...) asparagine glycosylation is present at Asn357. One can recognise an EGF-like 7 domain in the interval 366 to 402 (SLDACASLPCQNGGVCTNVGGDYVCECLPGYTGINCE). The EGF-like 8; calcium-binding domain occupies 404–440 (DINECASLPCQNGGECINGIAMYICQCRQGYAGVNCE). In terms of domain architecture, Avidin-like spans 443–562 (GFCDLEGVWF…GQDKWTRYEQ (120 aa)).

As to quaternary structure, homotetramer.

It localises to the secreted. The protein localises to the extracellular space. Forms the apical lamina, a component of the extracellular matrix. The chain is Fibropellin-3 (EGF3) from Strongylocentrotus purpuratus (Purple sea urchin).